A 1285-amino-acid chain; its full sequence is Protein crumbs homolog 2 (1285 aa).

Residues 1 to 28 form the signal peptide; the sequence is MALARPGTPDPQALASVLLLLLWAPALS. Positions 1 to 350 are required for maximum inhibition of APP amyloid-beta peptide secretion; it reads MALARPGTPD…GFQCHCPDGY (350 aa). Positions 67–106 constitute an EGF-like 1 domain; that stretch reads EPRGCATQPCHHGALCVPQGPDPTGFRCYCVPGFQGPRCE. Disulfide bonds link Cys71/Cys82, Cys76/Cys94, Cys96/Cys105, Cys112/Cys123, Cys117/Cys132, Cys134/Cys143, Cys150/Cys161, Cys155/Cys170, Cys172/Cys181, Cys188/Cys199, Cys193/Cys208, Cys210/Cys220, Cys227/Cys238, Cys232/Cys247, Cys249/Cys258, Cys265/Cys276, Cys270/Cys306, Cys308/Cys317, Cys324/Cys335, Cys329/Cys344, Cys346/Cys355, Cys362/Cys373, Cys367/Cys382, Cys384/Cys393, Cys400/Cys411, Cys405/Cys424, and Cys426/Cys435. Positions 108–144 constitute an EGF-like 2; calcium-binding domain; it reads DIDECASRPCHHGATCRNLADRYECHCPLGYAGVTCE. Positions 146–182 constitute an EGF-like 3; calcium-binding domain; sequence EVDECASAPCLHGGSCLDGVGSFRCVCAPGYGGTRCQ. An EGF-like 4; calcium-binding domain is found at 184 to 221; it reads DLDECQSQPCAHGGTCHDLVNGFRCDCAGTGYEGTHCE. 2 consecutive EGF-like domains span residues 223 to 259 and 261 to 318; these read EVLE…ELCE and DEDE…ADCG. Asn235 carries an N-linked (GlcNAc...) asparagine glycan. An O-linked (Glc...) serine glycan is attached at Ser267. One can recognise an EGF-like 7; calcium-binding domain in the interval 320 to 356; sequence EVDECASRPCLNGGHCQDLPNGFQCHCPDGYAGPTCE. Residues 358–394 enclose the EGF-like 8; calcium-binding domain; the sequence is DVDECLSDPCLHGGTCSDTVAGYICRCPETWGGRDCS. Residues 396-436 form the EGF-like 9 domain; sequence QLTGCQGHTCPLAATCIPIFESGVHSYVCHCPPGTHGPFCG. Residues 431-603 form the Laminin G-like 1 domain; sequence HGPFCGQNTT…DLGENVLLGC (173 aa). N-linked (GlcNAc...) asparagine glycosylation is found at Asn438 and Asn478. 4 disulfide bridges follow: Cys579-Cys603, Cys609-Cys620, Cys614-Cys629, and Cys631-Cys640. An EGF-like 10 domain is found at 605-641; it reads RREQCRPLPCVHGGSCVDLWTHFRCDCARPHRGPTCA. In terms of domain architecture, Laminin G-like 2 spans 647-805; sequence ATFGLGGAPS…RQSWNLTAGC (159 aa). N-linked (GlcNAc...) asparagine glycans are attached at residues Asn669, Asn690, Asn786, and Asn800. Disulfide bonds link Cys766/Cys805, Cys811/Cys822, Cys816/Cys831, and Cys833/Cys842. Residues 807 to 843 enclose the EGF-like 11 domain; that stretch reads SEDMCSPDPCFNGGTCLVTWNDFHCTCPANFTGPTCA. Residues Asn836, Asn886, Asn926, and Asn1009 are each glycosylated (N-linked (GlcNAc...) asparagine). Residues 871–1054 enclose the Laminin G-like 3 domain; the sequence is EATFREGPPA…PGTPAPILGC (184 aa). Disulfide bonds link Cys1013–Cys1054, Cys1060–Cys1071, Cys1065–Cys1080, Cys1082–Cys1091, Cys1098–Cys1108, Cys1103–Cys1118, Cys1120–Cys1129, Cys1138–Cys1150, Cys1144–Cys1159, Cys1161–Cys1170, Cys1177–Cys1188, Cys1182–Cys1197, and Cys1199–Cys1208. EGF-like domains lie at 1056–1092, 1094–1130, 1134–1171, and 1173–1209; these read GAPV…PRCE, HVDP…PRCR, PSKE…QRCQ, and PTLP…QFCE. Asn1141 and Asn1158 each carry an N-linked (GlcNAc...) asparagine glycan. The helical transmembrane segment at 1225–1245 threads the bilayer; that stretch reads VAVPAACACLLLLLLGLLSGI. Residues 1249–1285 form an interaction with EPB41L5 region; it reads RKRRQSEGTYSPSQQEVAGARLEMDSVLKVPPEERLI.

Belongs to the Crumbs protein family. Associates with the gamma-secretase complex via interaction (via the transmembrane domain) with PSEN1/PS1. Interacts (via intracellular domain) with EPB41L5. Interacts with PALS1. Post-translationally, O-glucosylated by POGLUT1 at Ser-267; consists of an O-glucose trisaccharide, in which the O-glucose is elongated by the addition of two xylose residues. O-glucosylation is required for localization at the plasma membrane. In terms of processing, N-glycosylated. Expressed in glomeruli, podocytes of the glomerular capillary loops, and parietal glomerular epithelial cells in the kidney (at protein level). Expressed in retina, fetal eye and brain. Also expressed in kidney, RPE/choroid, and at low levels in lung, placenta, and heart.

The protein localises to the apical cell membrane. It is found in the cytoplasm. Its subcellular location is the cell junction. It localises to the secreted. In terms of biological role, apical polarity protein that plays a central role during the epithelial-to-mesenchymal transition (EMT) at gastrulation, when newly specified mesodermal cells move inside the embryo. Acts by promoting cell ingression, the process by which cells leave the epithelial epiblast and move inside the embryo to form a new tissue layer. The anisotropic distribution of CRB2 and MYH10/myosin-IIB at cell edges define which cells will ingress: cells with high apical CRB2 are probably extruded from the epiblast by neighboring cells with high levels of apical MYH10/myosin-IIB. Plays a role in the maintenance of retinal neuroepithelium organization, structural integrity, adhesion, photoreceptor polarity and retinal photoreceptor layer thickness. May play a role in determining the length of cone photoreceptor outer segments and proliferation of late-born progenitor cells. Also required for maintenance of the apical polarity complex during development of the cortex. Inhibits gamma-secretase-dependent cleavage of APP and secretion of amyloid-beta peptide 40 and amyloid-beta peptide 42, and thereby inhibits gamma-secretase-dependent Notch transcription. The polypeptide is Protein crumbs homolog 2 (Homo sapiens (Human)).